The following is a 490-amino-acid chain: Bifunctional pantoate ligase/cytidylate kinase (490 aa).

1–8 is an ATP binding site; sequence MGGLHQGH. The interval 1–253 is pantoate--beta-alanine ligase; that stretch reads MGGLHQGHAR…CGETRLIDHV (253 aa). H8 serves as the catalytic Proton donor. Q35 is a binding site for (R)-pantoate. Q35 serves as a coordination point for beta-alanine. 124–127 serves as a coordination point for ATP; it reads GEKD. Q130 contributes to the (R)-pantoate binding site. ATP is bound by residues V153 and 161–164; that span reads ASSR. A cytidylate kinase region spans residues 254 to 490; that stretch reads FIMTRSPIVA…AKEIWPTPQG (237 aa).

This sequence in the N-terminal section; belongs to the pantothenate synthetase family. In the C-terminal section; belongs to the cytidylate kinase family. Type 1 subfamily.

The protein localises to the cytoplasm. The catalysed reaction is (R)-pantoate + beta-alanine + ATP = (R)-pantothenate + AMP + diphosphate + H(+). It catalyses the reaction CMP + ATP = CDP + ADP. It carries out the reaction dCMP + ATP = dCDP + ADP. It participates in cofactor biosynthesis; (R)-pantothenate biosynthesis; (R)-pantothenate from (R)-pantoate and beta-alanine: step 1/1. Its function is as follows. Catalyzes the condensation of pantoate with beta-alanine in an ATP-dependent reaction via a pantoyl-adenylate intermediate. In terms of biological role, catalyzes the transfer of a phosphate group from ATP to either CMP or dCMP to form CDP or dCDP and ADP, respectively. The polypeptide is Bifunctional pantoate ligase/cytidylate kinase (Synechococcus sp. (strain WH7803)).